The primary structure comprises 102 residues: Small ribosomal subunit protein uS10 (102 aa).

It belongs to the universal ribosomal protein uS10 family. Part of the 30S ribosomal subunit.

Its function is as follows. Involved in the binding of tRNA to the ribosomes. The polypeptide is Small ribosomal subunit protein uS10 (Geobacter sulfurreducens (strain ATCC 51573 / DSM 12127 / PCA)).